We begin with the raw amino-acid sequence, 661 residues long: Chermesin D/asnovolin J monooxidase nvfH (661 aa).

The N-linked (GlcNAc...) asparagine glycan is linked to Asn-12. The chain crosses the membrane as a helical span at residues 89–111; the sequence is VLIIGAGYGGLLFAVRIIQTGAF. FAD is bound by residues 128 to 131, 140 to 141, and Tyr-146; these read TWYW and DV. Position 138 to 140 (138 to 140) interacts with NADP(+); that stretch reads MCD. NADP(+)-binding positions include 286–292 and 309–310; these read TGATAIQ and RT. Asn-382 and Asn-538 each carry an N-linked (GlcNAc...) asparagine glycan.

This sequence belongs to the FAD-binding monooxygenase family. FAD serves as cofactor.

It is found in the membrane. The catalysed reaction is chermesin D + AH2 + O2 = asnovolin I + A + H2O. It catalyses the reaction asnovolin J + AH2 + O2 = asnovolin A + A + H2O. The protein operates within secondary metabolite biosynthesis; terpenoid biosynthesis. Chermesin D/asnovolin J monooxidase; part of the gene cluster that mediates the biosynthesis of novofumigatonin, a heavily oxygenated meroterpenoid containing a unique orthoester moiety. The first step of the pathway is the synthesis of 3,5-dimethylorsellinic acid (DMOA) by the polyketide synthase nvfA via condensation of one acetyl-CoA starter unit with 3 malonyl-CoA units and 2 methylations. DMOA is then converted to farnesyl-DMOA by the farnesyltransferase nvfB. Epoxydation by FAD-dependent monooxygenase nvfK, followed by a protonation-initiated cyclization catalyzed by the terpene cyclase nvfL leads to the production of asnavolin H. The short chain dehydrogenase nvfC then as a 3-OH dehydrogenase of asnovolin H to yield chemesin D. There are two branches to synthesize asnovolin A from chemesin D. In one branch, chemesin D undergoes Baeyer-Villiger oxidation by nvfH, methylation by nvfJ, and enoyl reduction by the nvfM D enoylreductase that reduces the double bond between C-5'and C-6', to form respectively asnovolin I, asnovolin K, and asnovolin A. In the other branch, the methylation precedes the Baeyer-Villiger oxidation and the enoyl reduction to yield asnovolin A via the asnovolin J intermediate. Asnovolin A is further converted to fumigatonoid A by the Fe(II)/2-oxoglutarate-dependent dioxygenase nvfI that catalyzes an endoperoxidation reaction. The alpha/beta hydrolase nvfD then acts as an epimerase that converts fumigatonoid A to its C-5' epimer, which then undergoes spontaneous or nvfD-catalyzed lactonization. The following step utilizes the ketoreductase nvfG to produce fumigatonoid B. The dioxygenase nvfE further converts fumigatonoid B into fumigatonoid C. Finally the Fe(II)/2-oxoglutarate-dependent dioxygenase nvfF catalyzes two rounds of oxidation to transform fumigatonoid C into the end product, novofumigatonin A. This Aspergillus novofumigatus (strain IBT 16806) protein is Chermesin D/asnovolin J monooxidase nvfH.